A 606-amino-acid chain; its full sequence is Ubiquitin-like modifier-activating enzyme ATG7 (606 aa).

The GXGXXG motif signature appears at 316–321 (GSGTLG). Residue Cys488 is the Glycyl thioester intermediate of the active site. Residues 567 to 606 (ALDDYKCVEKLSGLSKVQEEAELALEEDFDFSEDDEFVTG) form a homodimerization region.

Belongs to the ATG7 family. In terms of assembly, homodimer. Interacts with ATG8 through a thioester bond between Cys-488 and the C-terminal Gly of ATG8 and with ATG12 through a thioester bond between Cys-488 and the C-terminal Gly of ATG12. Also interacts with ATG3.

The protein resides in the cytoplasm. The protein localises to the preautophagosomal structure. In terms of biological role, E1-like activating enzyme involved in the 2 ubiquitin-like systems required for cytoplasm to vacuole transport (Cvt) and autophagy. Activates ATG12 for its conjugation with ATG5 and ATG8 for its conjugation with phosphatidylethanolamine. Both systems are needed for the ATG8 association to Cvt vesicles and autophagosomes membranes. Autophagy is essential for maintenance of amino acid levels and protein synthesis under nitrogen starvation. Required for selective autophagic degradation of the nucleus (nucleophagy) as well as for mitophagy which contributes to regulate mitochondrial quantity and quality by eliminating the mitochondria to a basal level to fulfill cellular energy requirements and preventing excess ROS production. In Kluyveromyces marxianus (strain DMKU3-1042 / BCC 29191 / NBRC 104275) (Yeast), this protein is Ubiquitin-like modifier-activating enzyme ATG7.